A 148-amino-acid chain; its full sequence is Protein ORM1 (148 aa).

A run of 4 helical transmembrane segments spans residues 12 to 32, 36 to 56, 89 to 109, and 111 to 131; these read WIIHVVVITLLKLFFNLFPGV, WSWTLTNMTYVVGSYVMFHLI, FLIIVPIALFLVSTHYAHYDL, and MFSWNCFLTTFVAVVPKLPVT.

The protein to yeast YLR350W C-terminus.

It is found in the membrane. The chain is Protein ORM1 (ORM1) from Saccharomyces pastorianus (strain ATCC 76670 / Carlsberg bottom yeast no.2 / CBS 1503 / CLIB 180 / NBRC 10610 / NRRL Y-1525) (Saaz-type lager yeast).